A 57-amino-acid polypeptide reads, in one-letter code: Large ribosomal subunit protein bL32 (57 aa).

Belongs to the bacterial ribosomal protein bL32 family.

In Staphylococcus aureus (strain MSSA476), this protein is Large ribosomal subunit protein bL32.